We begin with the raw amino-acid sequence, 894 residues long: ABC-transporter-regulating transcription factor (894 aa).

The zn(2)-C6 fungal-type DNA-binding region spans 71-98 (CDMCRKKKIKCDGKMPKCSHCINYRTDC). Polar residues predominate over residues 159–174 (NTALNSLKSPTNKFNG). Residues 159-219 (NTALNSLKSP…PKESETEVEG (61 aa)) form a disordered region. Residues 175–189 (SSATSQSQHTTASRH) show a composition bias toward low complexity. Residues 199–210 (SPHTAATSPNSP) show a composition bias toward polar residues. A helical transmembrane segment spans residues 649–669 (CVWLILYYPVSALVTLFANIL). The interval 724–797 (AEKESHSKKK…MSNPTRAFAP (74 aa)) is disordered. A compositionally biased stretch (basic and acidic residues) spans 736-750 (AAPDEPQDLRQKTPD). 2 stretches are compositionally biased toward polar residues: residues 751-761 (ENSVPSPSTKR) and 771-792 (LFPS…SNPT).

Its subcellular location is the nucleus. The protein resides in the membrane. In terms of biological role, transcription factor that regulates expression of the genes related to resistance to azole compounds. The chain is ABC-transporter-regulating transcription factor from Aspergillus oryzae (strain ATCC 42149 / RIB 40) (Yellow koji mold).